A 196-amino-acid polypeptide reads, in one-letter code: Endoribonuclease YbeY (196 aa).

Zn(2+) contacts are provided by H120, H124, and H130.

This sequence belongs to the endoribonuclease YbeY family. Requires Zn(2+) as cofactor.

The protein localises to the cytoplasm. Single strand-specific metallo-endoribonuclease involved in late-stage 70S ribosome quality control and in maturation of the 3' terminus of the 16S rRNA. This chain is Endoribonuclease YbeY, found in Corynebacterium diphtheriae (strain ATCC 700971 / NCTC 13129 / Biotype gravis).